The chain runs to 488 residues: Probable Xaa-Pro aminopeptidase ATEG_00858 (488 aa).

Mn(2+)-binding residues include Asp-273, Asp-284, Glu-417, and Glu-456.

This sequence belongs to the peptidase M24B family. Mn(2+) is required as a cofactor.

It carries out the reaction Release of any N-terminal amino acid, including proline, that is linked to proline, even from a dipeptide or tripeptide.. Catalyzes the removal of a penultimate prolyl residue from the N-termini of peptides. In Aspergillus terreus (strain NIH 2624 / FGSC A1156), this protein is Probable Xaa-Pro aminopeptidase ATEG_00858.